We begin with the raw amino-acid sequence, 197 residues long: Rac-like GTP-binding protein RHO1 (197 aa).

13-20 serves as a coordination point for GTP; sequence GDGAVGKT. Positions 35-43 match the Effector region motif; the sequence is YVPTVFDNF. Residues 60-64 and 118-121 each bind GTP; these read DTAGQ and TKLD. Cysteine 194 bears the Cysteine methyl ester mark. Cysteine 194 carries the S-geranylgeranyl cysteine lipid modification. A propeptide spans 195-197 (removed in mature form); that stretch reads SIL.

The protein belongs to the small GTPase superfamily. Rho family.

It localises to the cytoplasm. The protein localises to the membrane. In terms of biological role, inactive GDP-bound Rho GTPases reside in the cytosol, are found in a complex with Rho GDP-dissociation inhibitors (Rho GDIs), and are released from the GDI protein in order to translocate to membranes upon activation. In Beta vulgaris (Sugar beet), this protein is Rac-like GTP-binding protein RHO1 (RHO1).